Consider the following 177-residue polypeptide: Ribosome maturation factor RimP (177 aa).

The protein belongs to the RimP family.

It localises to the cytoplasm. Functionally, required for maturation of 30S ribosomal subunits. The polypeptide is Ribosome maturation factor RimP (Methylibium petroleiphilum (strain ATCC BAA-1232 / LMG 22953 / PM1)).